The primary structure comprises 105 residues: Large ribosomal subunit protein eL42 (105 aa).

The tract at residues lysine 23–glutamine 52 is disordered. The span at lysine 29 to glutamine 46 shows a compositional bias: basic and acidic residues.

It belongs to the eukaryotic ribosomal protein eL42 family.

This Brugia malayi (Filarial nematode worm) protein is Large ribosomal subunit protein eL42 (rpl-44).